We begin with the raw amino-acid sequence, 86 residues long: Large ribosomal subunit protein bL27 (86 aa).

Residues 1 to 21 form a disordered region; that stretch reads MAHKKGGGSSRNGRDSESKRL.

The protein belongs to the bacterial ribosomal protein bL27 family.

The chain is Large ribosomal subunit protein bL27 from Rubrobacter xylanophilus (strain DSM 9941 / JCM 11954 / NBRC 16129 / PRD-1).